A 213-amino-acid chain; its full sequence is Ubiquitin-conjugating enzyme E2 S (213 aa).

Residues 13-159 (QIIRQVAKEV…ARMMTEIHAK (147 aa)) form the UBC core domain. C97 acts as the Glycyl thioester intermediate in catalysis. A disordered region spans residues 157-213 (HAKPTTKTAPTKNEETNCPSTSGTQSTSEGPMAKKHAGDKNAAEKKKKEKKRALRRL). A compositionally biased stretch (polar residues) spans 174-185 (CPSTSGTQSTSE). A compositionally biased stretch (basic and acidic residues) spans 192–202 (HAGDKNAAEKK). Over residues 203 to 213 (KKEKKRALRRL) the composition is skewed to basic residues.

Belongs to the ubiquitin-conjugating enzyme family.

It carries out the reaction S-ubiquitinyl-[E1 ubiquitin-activating enzyme]-L-cysteine + [E2 ubiquitin-conjugating enzyme]-L-cysteine = [E1 ubiquitin-activating enzyme]-L-cysteine + S-ubiquitinyl-[E2 ubiquitin-conjugating enzyme]-L-cysteine.. It participates in protein modification; protein ubiquitination. Functionally, catalyzes the covalent attachment of ubiquitin to other proteins. Acts as an essential factor of the anaphase promoting complex/cyclosome (APC/C), a cell cycle-regulated ubiquitin ligase that controls progression through mitosis. Acts by specifically elongating polyubiquitin chains initiated by the E2 enzyme UBCH10 on APC/C substrates, enhancing the degradation of APC/C substrates by the proteasome and promoting mitotic exit. This is Ubiquitin-conjugating enzyme E2 S from Branchiostoma floridae (Florida lancelet).